The chain runs to 290 residues: Nucleotide-binding protein BPP4038 (290 aa).

Residue G9–S16 participates in ATP binding. Residue D58–S61 coordinates GTP.

Belongs to the RapZ-like family.

Its function is as follows. Displays ATPase and GTPase activities. The chain is Nucleotide-binding protein BPP4038 from Bordetella parapertussis (strain 12822 / ATCC BAA-587 / NCTC 13253).